The sequence spans 494 residues: UPF0371 protein stu1377 (494 aa).

The protein belongs to the UPF0371 family.

The protein is UPF0371 protein stu1377 of Streptococcus thermophilus (strain ATCC BAA-250 / LMG 18311).